A 258-amino-acid chain; its full sequence is Acetylglutamate kinase (258 aa).

Substrate is bound by residues Gly44–Gly45, Arg66, and Asn158. ATP contacts are provided by residues Asp181 to Leu186 and Ile209 to Thr211.

This sequence belongs to the acetylglutamate kinase family. ArgB subfamily. Homodimer.

It is found in the cytoplasm. The enzyme catalyses N-acetyl-L-glutamate + ATP = N-acetyl-L-glutamyl 5-phosphate + ADP. The protein operates within amino-acid biosynthesis; L-arginine biosynthesis; N(2)-acetyl-L-ornithine from L-glutamate: step 2/4. Catalyzes the ATP-dependent phosphorylation of N-acetyl-L-glutamate. The protein is Acetylglutamate kinase of Shigella dysenteriae serotype 1 (strain Sd197).